The following is a 137-amino-acid chain: Large ribosomal subunit protein uL16 (137 aa).

Belongs to the universal ribosomal protein uL16 family. Part of the 50S ribosomal subunit.

Its function is as follows. Binds 23S rRNA and is also seen to make contacts with the A and possibly P site tRNAs. In Spiroplasma citri, this protein is Large ribosomal subunit protein uL16.